The sequence spans 214 residues: MGRRPARCYRYCKNKPYPKSRFCRGVPDAKIRIFDLGRKKAKVDEFPLCGHMVSDEYEQLSSEALEAARICANKYMVKSCGKDGFHIRVRLHPFHVIRINKMLSCAGADRLQTGMRGAFGKPQGTVARVHIGQVIMSIRTKLQNKEHVIEALRRAKFKFPGRQKIHISKKWGFTKFNADEFENMVAEKRLIPDGCGVKYIPNRGPLDKWRALHS.

Citrulline is present on Arg-32. Lys-175 participates in a covalent cross-link: Glycyl lysine isopeptide (Lys-Gly) (interchain with G-Cter in SUMO2). Residue Lys-188 forms a Glycyl lysine isopeptide (Lys-Gly) (interchain with G-Cter in ubiquitin) linkage.

Belongs to the universal ribosomal protein uL16 family. In terms of assembly, component of the large ribosomal subunit. Mature ribosomes consist of a small (40S) and a large (60S) subunit. The 40S subunit contains about 33 different proteins and 1 molecule of RNA (18S). The 60S subunit contains about 49 different proteins and 3 molecules of RNA (28S, 5.8S and 5S). Citrullinated by PADI4. Post-translationally, ufmylated by UFL1.

The protein resides in the cytoplasm. In terms of biological role, component of the large ribosomal subunit. Plays a role in the formation of actively translating ribosomes. May play a role in the embryonic brain development. This Bos taurus (Bovine) protein is Large ribosomal subunit protein uL16.